The chain runs to 276 residues: Checkpoint protein HUS1B (276 aa).

Belongs to the HUS1 family. As to quaternary structure, interacts with RAD1 and RAD9B.

The protein is Checkpoint protein HUS1B (Hus1b) of Mus musculus (Mouse).